The sequence spans 555 residues: MPTTVDDVLEHGGEFHFFQKQMFFLLALLSATFAPIYVGIVFLGFTPDHRCRSPGVAELSLRCGWSPAEELNYTVPGPGPAGEASPRQCRRYEVDWNQSTFDCVDPLASLDTNRSRLPLGPCRDGWVYETPGSSIVTEFNLVCANSWMLDLFQSSVNVGFFIGSMSIGYIADRFGRKLCLLTTVLINAAAGVLMAISPTYTWMLIFRLIQGLVSKAGWLIGYILITEFVGRRYRRTVGIFYQVAYTVGLLVLAGVAYALPHWRWLQFTVSLPNFFFLLYYWCIPESPRWLISQNKNAEAMRIIKHIAKKNGKSLPASLQRLRLEEETGKKLNPSFLDLVRTPQIRKHTMILMYNWFTSSVLYQGLIMHMGLAGDNIYLDFFYSALVEFPAAFMIILTIDRIGRRYPWAASNMVAGAACLASVFIPGDLQWLKIIISCLGRMGITMAYEIVCLVNAELYPTFIRNLGVHICSSMCDIGGIITPFLVYRLTNIWLELPLMVFGVLGLVAGGLVLLLPETKGKALPETIEEAENMQRPRKNKEKMIYLQVQKLDIPLN.

Residues 1–22 lie on the Cytoplasmic side of the membrane; the sequence is MPTTVDDVLEHGGEFHFFQKQM. The chain crosses the membrane as a helical span at residues 23 to 43; sequence FFLLALLSATFAPIYVGIVFL. Over 44–150 the chain is Extracellular; that stretch reads GFTPDHRCRS…LVCANSWMLD (107 aa). N72 carries N-linked (GlcNAc...) asparagine glycosylation. Residues 151–171 traverse the membrane as a helical segment; it reads LFQSSVNVGFFIGSMSIGYIA. The Cytoplasmic portion of the chain corresponds to 172-177; it reads DRFGRK. The helical transmembrane segment at 178–198 threads the bilayer; it reads LCLLTTVLINAAAGVLMAISP. The Extracellular portion of the chain corresponds to 199-208; sequence TYTWMLIFRL. The chain crosses the membrane as a helical span at residues 209-229; that stretch reads IQGLVSKAGWLIGYILITEFV. Over 230–238 the chain is Cytoplasmic; that stretch reads GRRYRRTVG. A helical membrane pass occupies residues 239–259; the sequence is IFYQVAYTVGLLVLAGVAYAL. Residues 260–263 lie on the Extracellular side of the membrane; it reads PHWR. A helical membrane pass occupies residues 264–284; sequence WLQFTVSLPNFFFLLYYWCIP. The Proline-rich sequence motif lies at 284-288; the sequence is PESPR. At 285 to 348 the chain is on the cytoplasmic side; it reads ESPRWLISQN…VRTPQIRKHT (64 aa). A helical transmembrane segment spans residues 349 to 369; sequence MILMYNWFTSSVLYQGLIMHM. Residues 370–375 are Extracellular-facing; the sequence is GLAGDN. Residues 376-396 traverse the membrane as a helical segment; sequence IYLDFFYSALVEFPAAFMIIL. Over 397–414 the chain is Cytoplasmic; it reads TIDRIGRRYPWAASNMVA. Residues 415-435 traverse the membrane as a helical segment; the sequence is GAACLASVFIPGDLQWLKIII. Topologically, residues 436–441 are extracellular; that stretch reads SCLGRM. Residues 442–462 form a helical membrane-spanning segment; sequence GITMAYEIVCLVNAELYPTFI. Residues 463–464 lie on the Cytoplasmic side of the membrane; that stretch reads RN. The chain crosses the membrane as a helical span at residues 465–485; it reads LGVHICSSMCDIGGIITPFLV. At 486-494 the chain is on the extracellular side; sequence YRLTNIWLE. A helical membrane pass occupies residues 495–515; it reads LPLMVFGVLGLVAGGLVLLLP. Residues 516–555 are Cytoplasmic-facing; that stretch reads ETKGKALPETIEEAENMQRPRKNKEKMIYLQVQKLDIPLN.

It belongs to the major facilitator (TC 2.A.1) superfamily. Organic cation transporter (TC 2.A.1.19) family. In terms of processing, tyrosine phosphorylated by tyrosine-protein kinase YES1. In terms of tissue distribution, mainly expressed in kidney, in the cortex and medulla. Localized in testis, mostly to peritubular myoid cells and Leydig cells and also detected along the basal membrane of Sertoli cells. Expressed in brain, in neurons of the cerebral cortex and in various subcortical nuclei. In the brain, also detected in the dopaminergic regions of the substantia nigra. Expressed in tracheal and bronchial ciliated epithelium in the respiratory tract. Also detected in secretory phase endometrium, in scattered stromal cells. Expressed in spleen, placenta, small intestine and spinal cord. Weakly expressed in prostate, uterus and lung. Mainly expressed in kidney, bone marrow and testis. Expressed in colon, skeletal muscle, spinal cord, placenta and liver.

Its subcellular location is the basolateral cell membrane. The protein localises to the basal cell membrane. It localises to the apical cell membrane. The catalysed reaction is (R)-noradrenaline(out) = (R)-noradrenaline(in). It catalyses the reaction (R)-adrenaline(out) = (R)-adrenaline(in). It carries out the reaction serotonin(out) = serotonin(in). The enzyme catalyses dopamine(out) = dopamine(in). The catalysed reaction is histamine(out) = histamine(in). It catalyses the reaction thiamine(in) = thiamine(out). It carries out the reaction creatinine(in) = creatinine(out). The enzyme catalyses 1-methylnicotinamide(out) = 1-methylnicotinamide(in). The catalysed reaction is guanidine(out) = guanidine(in). It catalyses the reaction choline(out) = choline(in). It carries out the reaction agmatine(out) = agmatine(in). The enzyme catalyses putrescine(out) = putrescine(in). The catalysed reaction is spermidine(in) = spermidine(out). It catalyses the reaction tyramine(in) = tyramine(out). It carries out the reaction L-histidyl-L-proline diketopiperazine(in) = L-histidyl-L-proline diketopiperazine(out). The enzyme catalyses (R)-salsolinol(in) = (R)-salsolinol(out). The catalysed reaction is N-methyl-(R)-salsolinol(in) = N-methyl-(R)-salsolinol(out). It catalyses the reaction acetylcholine(in) = acetylcholine(out). It carries out the reaction prostaglandin F2alpha(out) = prostaglandin F2alpha(in). The enzyme catalyses prostaglandin E2(out) = prostaglandin E2(in). Tyrosine phosphorylation of the transporter leads to activation of the transport activity. TEA uptake is activated by tyrosine phosphorylation. Inhibited by cGMP, most likely through a cGMP-binding protein that interacts with OCT2. Electrogenic voltage-dependent transporter that mediates the transport of a variety of organic cations such as endogenous bioactive amines, cationic drugs and xenobiotics. Functions as a Na(+)-independent, bidirectional uniporter. Cation cellular uptake or release is driven by the electrochemical potential, i.e. membrane potential and concentration gradient. However, may also engage electroneutral cation exchange when saturating concentrations of cation substrates are reached. Predominantly expressed at the basolateral membrane of hepatocytes and proximal tubules and involved in the uptake and disposition of cationic compounds by hepatic and renal clearance from the blood flow. Implicated in monoamine neurotransmitters uptake such as histamine, dopamine, adrenaline/epinephrine, noradrenaline/norepinephrine, serotonin and tyramine, thereby supporting a physiological role in the central nervous system by regulating interstitial concentrations of neurotransmitters. Also capable of transporting dopaminergic neuromodulators cyclo(his-pro), salsolinol and N-methyl-salsolinol, thereby involved in the maintenance of dopaminergic cell integrity in the central nervous system. Mediates the bidirectional transport of acetylcholine (ACh) at the apical membrane of ciliated cell in airway epithelium, thereby playing a role in luminal release of ACh from bronchial epithelium. Also transports guanidine and endogenous monoamines such as vitamin B1/thiamine, creatinine and N-1-methylnicotinamide (NMN). Mediates the uptake and efflux of quaternary ammonium compound choline. Mediates the bidirectional transport of polyamine agmatine and the uptake of polyamines putrescine and spermidine. Able to transport non-amine endogenous compounds such as prostaglandin E2 (PGE2) and prostaglandin F2-alpha (PGF2-alpha). Also involved in the uptake of xenobiotic 4-(4-(dimethylamino)styryl)-N-methylpyridinium (ASP). May contribute to regulate the transport of organic compounds in testis across the blood-testis-barrier. Its function is as follows. In contrast with isoform 1, not able to transport guanidine, creatinine, cimetidine and metformin. The polypeptide is Solute carrier family 22 member 2 (Homo sapiens (Human)).